The primary structure comprises 792 residues: LPS-assembly protein LptD (792 aa).

The signal sequence occupies residues Met-1–Ala-22.

Belongs to the LptD family. In terms of assembly, component of the lipopolysaccharide transport and assembly complex. Interacts with LptE and LptA.

Its subcellular location is the cell outer membrane. Its function is as follows. Together with LptE, is involved in the assembly of lipopolysaccharide (LPS) at the surface of the outer membrane. In Xylella fastidiosa (strain 9a5c), this protein is LPS-assembly protein LptD.